Reading from the N-terminus, the 669-residue chain is Dymeclin (669 aa).

G2 carries N-myristoyl glycine lipidation.

The protein belongs to the dymeclin family. Myristoylated in vitro; myristoylation is not essential for protein targeting to Golgi compartment.

Its subcellular location is the cytoplasm. It localises to the golgi apparatus. Its function is as follows. Necessary for correct organization of Golgi apparatus. The sequence is that of Dymeclin (dym) from Xenopus laevis (African clawed frog).